We begin with the raw amino-acid sequence, 189 residues long: UPF0398 protein lp_1753 (189 aa).

Belongs to the UPF0398 family.

The protein is UPF0398 protein lp_1753 of Lactiplantibacillus plantarum (strain ATCC BAA-793 / NCIMB 8826 / WCFS1) (Lactobacillus plantarum).